The following is a 432-amino-acid chain: Ubiquitin-like modifier-activating enzyme 5 (432 aa).

Positions 25 to 47 (ETKKNQTPSVLKGPTVSQERPSA) are disordered. Residues 29-44 (NQTPSVLKGPTVSQER) are compositionally biased toward polar residues. 5 residues coordinate ATP: glycine 96, aspartate 117, lysine 140, asparagine 163, and asparagine 196. Zn(2+)-binding residues include cysteine 238 and cysteine 241. The active-site Glycyl thioester intermediate is cysteine 262. Zn(2+) contacts are provided by cysteine 315 and cysteine 320. The segment at 363 to 406 (DTTEAPSSSAATEVAPGLKFAYEPTQTPKKNSSDNLKLSPSQAV) is disordered. Residues 386–406 (PTQTPKKNSSDNLKLSPSQAV) show a composition bias toward polar residues.

The protein belongs to the ubiquitin-activating E1 family. UBA5 subfamily. As to quaternary structure, interacts with ufc-1.

In terms of biological role, E1-like enzyme which activates ufm-1. Required for interaction between ufm-1 and ufc-1. The polypeptide is Ubiquitin-like modifier-activating enzyme 5 (Caenorhabditis briggsae).